We begin with the raw amino-acid sequence, 92 residues long: MACPLDQAISLLVAIFHKYSSREGDKNTLSKGELKELIQKELTIGAELEDSEIAKLLDDLDQNKDQVVNFQEYVTFLGALAMIYNEVLKACS.

EF-hand domains follow at residues 12–47 (LVAI…IGAE) and 48–83 (LEDS…LAMI). Ca(2+) contacts are provided by Thr-28 and Glu-33. Lys-40 carries the N6-acetyllysine modification. The Ca(2+) site is built by Asp-61, Asn-63, Asp-65, and Glu-72.

It belongs to the S-100 family. Homodimer; head to tail assembly of 2 subunits. Interacts with CACYBP in a calcium-dependent manner. Interacts with ANXA2 and ANXA11 (via N-terminus). Interacts with SUGT1. Interacts with TP53; has higher affinity for TP53 that is phosphorylated on its N-terminal domain, and lower affinity for TP53 that is phosphorylated on its C-terminal domain. Interacts with tropomyosin. Interacts with FKBP4. Interacts with PPP5C (via TPR repeats); the interaction is calcium-dependent and modulates PPP5C activity. Interacts with TPPP; this interaction inhibits TPPP dimerization.

The protein localises to the nucleus envelope. It localises to the cytoplasm. It is found in the cell membrane. Its function is as follows. May function as calcium sensor and modulator, contributing to cellular calcium signaling. May function by interacting with other proteins, such as TPR-containing proteins, and indirectly play a role in many physiological processes such as the reorganization of the actin cytoskeleton and in cell motility. Binds 2 calcium ions. Calcium binding is cooperative. This Equus caballus (Horse) protein is Protein S100-A6 (S100A6).